The chain runs to 374 residues: tRNA-specific 2-thiouridylase MnmA (374 aa).

Residues 15–22 (GMSGGVDS) and methionine 41 contribute to the ATP site. Residues 101 to 103 (NPD) form an interaction with target base in tRNA region. Catalysis depends on cysteine 106, which acts as the Nucleophile. The cysteines at positions 106 and 203 are disulfide-linked. Residue glycine 130 participates in ATP binding. The tract at residues 153-155 (KDQ) is interaction with tRNA. Cysteine 203 functions as the Cysteine persulfide intermediate in the catalytic mechanism. The interval 311-312 (RY) is interaction with tRNA.

Belongs to the MnmA/TRMU family.

It localises to the cytoplasm. The enzyme catalyses S-sulfanyl-L-cysteinyl-[protein] + uridine(34) in tRNA + AH2 + ATP = 2-thiouridine(34) in tRNA + L-cysteinyl-[protein] + A + AMP + diphosphate + H(+). Its function is as follows. Catalyzes the 2-thiolation of uridine at the wobble position (U34) of tRNA, leading to the formation of s(2)U34. In Lysinibacillus sphaericus (strain C3-41), this protein is tRNA-specific 2-thiouridylase MnmA.